A 324-amino-acid polypeptide reads, in one-letter code: Ferrochelatase (324 aa).

The Fe cation site is built by histidine 197 and glutamate 278.

Belongs to the ferrochelatase family.

The protein resides in the cytoplasm. It catalyses the reaction heme b + 2 H(+) = protoporphyrin IX + Fe(2+). The protein operates within porphyrin-containing compound metabolism; protoheme biosynthesis; protoheme from protoporphyrin-IX: step 1/1. Catalyzes the ferrous insertion into protoporphyrin IX. This is Ferrochelatase from Aeromonas hydrophila subsp. hydrophila (strain ATCC 7966 / DSM 30187 / BCRC 13018 / CCUG 14551 / JCM 1027 / KCTC 2358 / NCIMB 9240 / NCTC 8049).